The following is a 485-amino-acid chain: Zinc finger SWIM domain-containing protein 1 (485 aa).

The SWIM-type zinc-finger motif lies at 363–405 (MNIQILEDTHKVQPQPPASCSCYFNQAFHLPCRHILAMLSARR).

The protein is Zinc finger SWIM domain-containing protein 1 (ZSWIM1) of Homo sapiens (Human).